The sequence spans 167 residues: Transcription initiation factor TFIID subunit 10 (167 aa).

2 disordered regions span residues 1–56 (MASD…EESE) and 119–139 (TTNI…NPKD). Residues 41–56 (EQPDVEEVPLTTEESE) show a composition bias toward acidic residues. A compositionally biased stretch (basic and acidic residues) spans 130-139 (SSKDKKNPKD).

Belongs to the TAF10 family. Belongs to the TFIID complex which is composed of TATA binding protein (Tbp) and a number of TBP-associated factors (TAFs). Also a member of the histone acetylase (HAT) complex. At embryonic stage 9, highest expression is detected within the ectoderm, ventral chord, and anterior foregut primordium. Later in development preferential expression is in the foregut, proventriculus, and central nervous system. Coexpressed with Taf10b in the lateral epidermis and anal plate.

The protein resides in the cytoplasm. Its subcellular location is the nucleus. Functionally, TFIID is a multimeric protein complex that plays a central role in mediating promoter responses to various activators and repressors. In Drosophila melanogaster (Fruit fly), this protein is Transcription initiation factor TFIID subunit 10.